A 322-amino-acid polypeptide reads, in one-letter code: uncharacterized protein (322 aa).

Composition is skewed to basic residues over residues 1–16 (MPGN…KSGT) and 43–61 (LRPH…RRPV). Residues 1–69 (MPGNSRRRGA…PVKRADETET (69 aa)) form a disordered region. Gly-261, Ile-281, and Leu-290 together coordinate S-adenosyl-L-methionine.

Belongs to the class IV-like SAM-binding methyltransferase superfamily. RNA methyltransferase TrmH family.

This is an uncharacterized protein from Mycobacterium tuberculosis (strain CDC 1551 / Oshkosh).